Consider the following 437-residue polypeptide: Trigger factor (437 aa).

The 86-residue stretch at 161 to 246 (DDQVNIDFVG…VNSVSAPQLP (86 aa)) folds into the PPIase FKBP-type domain.

Belongs to the FKBP-type PPIase family. Tig subfamily.

It is found in the cytoplasm. The enzyme catalyses [protein]-peptidylproline (omega=180) = [protein]-peptidylproline (omega=0). Its function is as follows. Involved in protein export. Acts as a chaperone by maintaining the newly synthesized protein in an open conformation. Functions as a peptidyl-prolyl cis-trans isomerase. The protein is Trigger factor of Pseudomonas putida (strain W619).